Reading from the N-terminus, the 583-residue chain is CD166 antigen (583 aa).

A signal peptide spans Met-1–Gly-27. Ig-like V-type domains lie at Trp-28–Asn-120 and Pro-125–Tyr-234. At Trp-28–Lys-527 the chain is on the extracellular side. Intrachain disulfides connect Cys-43/Cys-113 and Cys-157/Cys-220. N-linked (GlcNAc...) asparagine glycans are attached at residues Asn-95, Asn-167, Asn-265, Asn-306, Asn-361, Asn-457, Asn-480, and Asn-499. Ig-like C2-type domains lie at Pro-245 to Thr-328, Asp-333 to Thr-409, and Pro-416 to Ser-501. Cystine bridges form between Cys-270/Cys-313, Cys-354/Cys-392, and Cys-435/Cys-485. The helical transmembrane segment at Leu-528–Leu-549 threads the bilayer. At Tyr-550–Ala-583 the chain is on the cytoplasmic side. The interval Asn-562–Ala-583 is disordered. Residues Glu-569–Ala-583 are compositionally biased toward basic and acidic residues.

Homodimer. Interacts (via extracellular domain) with CD6 (via extracellular domain). Homodimerization and interaction with CD6 involve the same region and cannot occur simultaneously. The affinity for CD6 is much higher than the affinity for self-association. Interacts (via glycosylated extracellular domain) with LGALS1 and LGALS3. Interaction with LGALS1 or LGALS3 inhibits interaction with CD6. The N-terminus is blocked. In terms of processing, glycosylated. In terms of tissue distribution, strongest expression in the lung, then brain, liver, and kidney. Present in the somatosensory system, basal ganglia, cortex, olfactory system, and circumventricular organs.

It is found in the cell membrane. The protein localises to the cell projection. Its subcellular location is the axon. The protein resides in the dendrite. Cell adhesion molecule that mediates both heterotypic cell-cell contacts via its interaction with CD6, as well as homotypic cell-cell contacts. Promotes T-cell activation and proliferation via its interactions with CD6. Contributes to the formation and maturation of the immunological synapse via its interactions with CD6. Mediates homotypic interactions with cells that express ALCAM. Mediates attachment of dendritic cells onto endothelial cells via homotypic interaction. Inhibits endothelial cell migration and promotes endothelial tube formation via homotypic interactions. Required for normal organization of the lymph vessel network. Required for normal hematopoietic stem cell engraftment in the bone marrow. Plays a role in hematopoiesis; required for normal numbers of hematopoietic stem cells in bone marrow. Promotes in vitro osteoblast proliferation and differentiation. Promotes neurite extension, axon growth and axon guidance; axons grow preferentially on surfaces that contain ALCAM. Mediates outgrowth and pathfinding for retinal ganglion cell axons. In Rattus norvegicus (Rat), this protein is CD166 antigen (Alcam).